A 473-amino-acid chain; its full sequence is 3-isopropylmalate dehydratase large subunit (473 aa).

Positions 351, 414, and 417 each coordinate [4Fe-4S] cluster.

Belongs to the aconitase/IPM isomerase family. LeuC type 1 subfamily. In terms of assembly, heterodimer of LeuC and LeuD. [4Fe-4S] cluster is required as a cofactor.

The enzyme catalyses (2R,3S)-3-isopropylmalate = (2S)-2-isopropylmalate. Its pathway is amino-acid biosynthesis; L-leucine biosynthesis; L-leucine from 3-methyl-2-oxobutanoate: step 2/4. In terms of biological role, catalyzes the isomerization between 2-isopropylmalate and 3-isopropylmalate, via the formation of 2-isopropylmaleate. This chain is 3-isopropylmalate dehydratase large subunit, found in Variovorax paradoxus (strain S110).